Here is a 200-residue protein sequence, read N- to C-terminus: Endoribonuclease YbeY (200 aa).

Histidine 120, histidine 124, and histidine 130 together coordinate Zn(2+).

It belongs to the endoribonuclease YbeY family. Zn(2+) is required as a cofactor.

It localises to the cytoplasm. Single strand-specific metallo-endoribonuclease involved in late-stage 70S ribosome quality control and in maturation of the 3' terminus of the 16S rRNA. The sequence is that of Endoribonuclease YbeY from Corynebacterium efficiens (strain DSM 44549 / YS-314 / AJ 12310 / JCM 11189 / NBRC 100395).